Reading from the N-terminus, the 137-residue chain is Putative pre-16S rRNA nuclease (137 aa).

It belongs to the YqgF nuclease family.

Its subcellular location is the cytoplasm. Its function is as follows. Could be a nuclease involved in processing of the 5'-end of pre-16S rRNA. This is Putative pre-16S rRNA nuclease from Buchnera aphidicola subsp. Baizongia pistaciae (strain Bp).